A 311-amino-acid chain; its full sequence is MATPLFESTIKSLPLLGRGKVRDIYAVDADKLLIVTSDRLSAFDVILPNPIPDKGRVLTAMANFWFAKLGHIVPNQLTGIDPESVVAADEREQVKGRALVVKRLKPLPIEAVVRGYVIGSGWKDYQDTGAICGIALPAGLKQAAKLPAPIFTPASKAEVGDHDENISFAQAQANCDAVLAEALAGTGKTGAGLAEEARQAAIALYSQAADYAAGRGIIIADTKFEFGIDAAGTLHLIDEALTPDSSRFWPADSYREGISPPSYDKQYVRDYLETLDWNKKAPGPDLPADVVERTAAKYREAYEKLTGLTLA.

It belongs to the SAICAR synthetase family.

It carries out the reaction 5-amino-1-(5-phospho-D-ribosyl)imidazole-4-carboxylate + L-aspartate + ATP = (2S)-2-[5-amino-1-(5-phospho-beta-D-ribosyl)imidazole-4-carboxamido]succinate + ADP + phosphate + 2 H(+). It functions in the pathway purine metabolism; IMP biosynthesis via de novo pathway; 5-amino-1-(5-phospho-D-ribosyl)imidazole-4-carboxamide from 5-amino-1-(5-phospho-D-ribosyl)imidazole-4-carboxylate: step 1/2. The protein is Phosphoribosylaminoimidazole-succinocarboxamide synthase of Azoarcus sp. (strain BH72).